The chain runs to 1562 residues: DNA-directed RNA polymerase subunit beta'' (1562 aa).

The interval 1-22 (MVKKKKFKTKNIQNPPFSSQNS) is disordered. A compositionally biased stretch (polar residues) spans 11 to 22 (NIQNPPFSSQNS). Zn(2+)-binding residues include cysteine 275, cysteine 338, cysteine 345, and cysteine 348.

This sequence belongs to the RNA polymerase beta' chain family. RpoC2 subfamily. In terms of assembly, in plastids the minimal PEP RNA polymerase catalytic core is composed of four subunits: alpha, beta, beta', and beta''. When a (nuclear-encoded) sigma factor is associated with the core the holoenzyme is formed, which can initiate transcription. Requires Zn(2+) as cofactor.

The protein resides in the plastid. It is found in the chloroplast. The enzyme catalyses RNA(n) + a ribonucleoside 5'-triphosphate = RNA(n+1) + diphosphate. In terms of biological role, DNA-dependent RNA polymerase catalyzes the transcription of DNA into RNA using the four ribonucleoside triphosphates as substrates. The polypeptide is DNA-directed RNA polymerase subunit beta'' (Chlorella vulgaris (Green alga)).